The chain runs to 320 residues: Short-chain dehydrogenase/reductase ARMGADRAFT_1169971 (320 aa).

A helical transmembrane segment spans residues 19–39 (KVAVVTGANSGIGLYILFHVA). 4 residues coordinate NADP(+): Ile30, Asp78, Asn105, and Lys136. The N-linked (GlcNAc...) asparagine glycan is linked to Asn157. Ser159 (proton donor) is an active-site residue. Residues Tyr192, Lys196, Val227, and Ser229 each coordinate NADP(+). The active-site Proton acceptor is the Tyr192. The Lowers pKa of active site Tyr role is filled by Lys196. Residues 235 to 255 (LFTSLMFGTIINWVFSLFFIS) form a helical membrane-spanning segment.

Belongs to the short-chain dehydrogenases/reductases (SDR) family.

Its subcellular location is the membrane. It participates in secondary metabolite biosynthesis. In terms of biological role, short-chain dehydrogenase/reductase, part of the gene cluster that mediates the biosynthesis of melleolides, a range of antifungal and phytotoxic polyketide derivatives composed of an orsellinic acid (OA) moiety esterified to various sesquiterpene alcohols. The first step in melleolides biosynthesis is performed by the delta(6)-protoilludene synthase PRO1 which catalyzes the cyclization of farnesyl diphosphate to protoilludene. The orsellinic acid synthase armB produces OA by condensing acetyl-CoA with 3 malonyl-CoA units in a three-round chain elongation reaction folowed by a C2-C7 ring closure. ArmB further catalyzes the trans-esterification of OA to the various sesquiterpene alcohols resulting from the hydroxylation of protoilludene. The melleolides cluster also includes 5 cytochrome P450 monooxygenases, 4 NAD(+)-dependent oxidoreductases, one flavin-dependent oxidoreductase, and one O-methyltransferase. The cytochrome P450 monooxygenases may be involved in protoilludene hydroxylation to elaborate melleolides with multiple alcohol groups, such as melleolide D, which carries alcohol functionalities at C-4, C-5, C-10, and C-13. The role of the NAD(+)-dependent enzymes remains unknown. Numerous melleolides, including arnamial, show 5'-O-methylation of the aromatic moiety which may be catalyzed by the methyltransferase encoded in the cluster. The flavin-dependent oxidoreductase might represent the dehydrogenase yielding the aldehyde in position 1 of arnamial and other melleolides. Finally, several halogenase localized outside of the cluster, are able to catalyze the transfer of a single chlorine atom to the melleolide backbone, resulting in a 6'-chloromelleolide product. This chain is Short-chain dehydrogenase/reductase ARMGADRAFT_1169971, found in Armillaria gallica (Bulbous honey fungus).